We begin with the raw amino-acid sequence, 301 residues long: Glycine cleavage system transcriptional activator homolog (301 aa).

An HTH lysR-type domain is found at 10–67; sequence PPLNSLKSFESAARYLSFTKAADELCVTQAAVSHQIKLLEXFLGIDLFKRKNRSLELT. The segment at residues 27 to 46 is a DNA-binding region (H-T-H motif); the sequence is FTKAADELCVTQAAVSHQIK.

Belongs to the LysR transcriptional regulatory family.

The protein resides in the cytoplasm. Not known, the gcv operon regulated by the E.coli homolog does not exist in H.influenzae, so it probably acts as a transcriptional regulator on some other operon. In Haemophilus influenzae (strain ATCC 51907 / DSM 11121 / KW20 / Rd), this protein is Glycine cleavage system transcriptional activator homolog (gcvA).